The primary structure comprises 184 residues: Tumor necrosis factor alpha-induced protein 8-like protein 2 (184 aa).

Ser-3 bears the Phosphoserine mark.

The protein belongs to the TNFAIP8 family. TNFAIP8L2 subfamily. May interact with CASP8; however, such result is unclear since could not reproduce the interaction with CASP8. Interacts with RAC1. Phosphorylated by TAK1/MAP3K7; this phosphorylation triggers association with BTRC and subsequent ubiquitination and degradation. In terms of processing, ubiquitinated in a BTRC-depdent manner; leading to degradation mediated through the proteasome pathway.

It is found in the cytoplasm. It localises to the nucleus. The protein localises to the lysosome. Its function is as follows. Acts as a negative regulator of innate and adaptive immunity by maintaining immune homeostasis. Plays a regulatory role in the Toll-like signaling pathway by determining the strength of LPS-induced signaling and gene expression. Inhibits TCR-mediated T-cell activation and negatively regulate T-cell function to prevent hyperresponsiveness. Also inhibits autolysosome formation via negatively modulating MTOR activation by interacting with RAC1 and promoting the disassociation of the RAC1-MTOR complex. Plays an essential role in NK-cell biology by acting as a checkpoint and displaying an expression pattern correlating with NK-cell maturation process and by negatively regulating NK-cell maturation and antitumor immunity. Mechanistically, suppresses IL-15-triggered mTOR activity in NK-cells. The chain is Tumor necrosis factor alpha-induced protein 8-like protein 2 (TNFAIP8L2) from Oryctolagus cuniculus (Rabbit).